The chain runs to 358 residues: Probable D-xylulose reductase A (358 aa).

Zn(2+) contacts are provided by cysteine 47, histidine 72, and glutamate 73. 182-187 (GAGPVG) is a binding site for NAD(+).

It belongs to the zinc-containing alcohol dehydrogenase family. Requires Zn(2+) as cofactor.

It carries out the reaction xylitol + NAD(+) = D-xylulose + NADH + H(+). It participates in carbohydrate degradation; L-arabinose degradation via L-arabinitol; D-xylulose 5-phosphate from L-arabinose (fungal route): step 4/5. Xylitol dehydrogenase which catalyzes the conversion of xylitol to D-xylulose. Xylose is a major component of hemicelluloses such as xylan. Most fungi utilize D-xylose via three enzymatic reactions, xylose reductase (XR), xylitol dehydrogenase (XDH), and xylulokinase, to form xylulose 5-phosphate, which enters pentose phosphate pathway. The polypeptide is Probable D-xylulose reductase A (xdhA) (Aspergillus niger (strain ATCC MYA-4892 / CBS 513.88 / FGSC A1513)).